Here is a 428-residue protein sequence, read N- to C-terminus: UDP-N-acetylglucosamine 1-carboxyvinyltransferase 2 (428 aa).

Residue 22 to 23 (KN) coordinates phosphoenolpyruvate. R92 serves as a coordination point for UDP-N-acetyl-alpha-D-glucosamine. C116 functions as the Proton donor in the catalytic mechanism. C116 is subject to 2-(S-cysteinyl)pyruvic acid O-phosphothioketal. Residues 121 to 125 (RPIDQ), D304, and I326 each bind UDP-N-acetyl-alpha-D-glucosamine.

Belongs to the EPSP synthase family. MurA subfamily.

It is found in the cytoplasm. It carries out the reaction phosphoenolpyruvate + UDP-N-acetyl-alpha-D-glucosamine = UDP-N-acetyl-3-O-(1-carboxyvinyl)-alpha-D-glucosamine + phosphate. Its pathway is cell wall biogenesis; peptidoglycan biosynthesis. Cell wall formation. Adds enolpyruvyl to UDP-N-acetylglucosamine. In Oceanobacillus iheyensis (strain DSM 14371 / CIP 107618 / JCM 11309 / KCTC 3954 / HTE831), this protein is UDP-N-acetylglucosamine 1-carboxyvinyltransferase 2.